The sequence spans 31 residues: Cytochrome b6-f complex subunit 6 (31 aa).

The helical transmembrane segment at 4 to 24 (ILTYFGILFGILTITVIIFVA) threads the bilayer.

The protein belongs to the PetL family. The 4 large subunits of the cytochrome b6-f complex are cytochrome b6, subunit IV (17 kDa polypeptide, PetD), cytochrome f and the Rieske protein, while the 4 small subunits are PetG, PetL, PetM and PetN. The complex functions as a dimer.

The protein resides in the plastid. It localises to the chloroplast thylakoid membrane. Component of the cytochrome b6-f complex, which mediates electron transfer between photosystem II (PSII) and photosystem I (PSI), cyclic electron flow around PSI, and state transitions. PetL is important for photoautotrophic growth as well as for electron transfer efficiency and stability of the cytochrome b6-f complex. This Chaetosphaeridium globosum (Charophycean green alga) protein is Cytochrome b6-f complex subunit 6.